The sequence spans 278 residues: MAPVGDKKAKKGILERLNSGEVVIGDGGFVFALEKRGYVKAGPWTPEAAVEHPEAVRQLHREFLRAGSNVMQTFTFYASEDKLENRGNYVAEKISGQKVNEAACDIARQVADEGDALVAGGVSQTPSYLSCKSETEVKKVFRQQLEVFMKKNVDFLIAEYFEHVEEAVWAVEALKASGKPVAATMCIGPEGDLHGVTPGQCAVRLVKAGASIVGVNCHFDPTISLQTVKLMKEGLQAAGLKAHLMSQPLAYHTPDCGKQGFIDLPEFPFGLEPRVATR.

A Hcy-binding domain is found at Lys-11–Arg-278. Residues Lys-40, Lys-93, and Lys-98 each carry the N6-succinyllysine modification. Cys-217 contacts Zn(2+). N6-succinyllysine occurs at positions 232 and 241.

In terms of assembly, homotetramer. Requires Zn(2+) as cofactor. Found exclusively in liver and kidney.

Its subcellular location is the cytoplasm. The protein localises to the cytosol. It localises to the nucleus. The enzyme catalyses L-homocysteine + glycine betaine = N,N-dimethylglycine + L-methionine. Its pathway is amine and polyamine degradation; betaine degradation; sarcosine from betaine: step 1/2. It participates in amino-acid biosynthesis; L-methionine biosynthesis via de novo pathway; L-methionine from L-homocysteine (BhmT route): step 1/1. Its activity is regulated as follows. Inhibited by dimethylglycine and methylthioacetate. Involved in the regulation of homocysteine metabolism. Converts betaine and homocysteine to dimethylglycine and methionine, respectively. This reaction is also required for the irreversible oxidation of choline. This Sus scrofa (Pig) protein is Betaine--homocysteine S-methyltransferase 1.